Here is a 111-residue protein sequence, read N- to C-terminus: Complement inhibitor CirpT1 (111 aa).

The N-terminal stretch at 1–19 (MATLIAARTKRKAPRVRIF) is a signal peptide. 4 disulfide bridges follow: Cys-40-Cys-64, Cys-59-Cys-98, Cys-76-Cys-99, and Cys-85-Cys-104.

Belongs to the CirpT family. In terms of tissue distribution, expressed in salivary glands.

The protein localises to the secreted. Functionally, complement inhibitor. Prevents complement-mediated activation of C5 by sterically preventing direct binding of C5 to its convertase (binding with domains MG4 and MG5). Binds C5 at a different binding site than the other tick complement inhibitors OmCI and RaCI3, and the drug eculizumab. Inhibits the complement in human, rat and guinea pig, and also shows a reduced inhibition in rabbit and pig. This is Complement inhibitor CirpT1 from Rhipicephalus pulchellus (Yellow backed tick).